The following is a 508-amino-acid chain: 2-isopropylmalate synthase (508 aa).

A Pyruvate carboxyltransferase domain is found at 5-267; sequence IKIFDTTLRD…THRIDTTQIY (263 aa). Positions 14, 202, 204, and 238 each coordinate Mn(2+). The interval 390 to 508 is regulatory domain; the sequence is VIDSFQINSG…SEIGESIISQ (119 aa).

The protein belongs to the alpha-IPM synthase/homocitrate synthase family. LeuA type 1 subfamily. As to quaternary structure, homodimer. Requires Mn(2+) as cofactor.

It is found in the cytoplasm. It carries out the reaction 3-methyl-2-oxobutanoate + acetyl-CoA + H2O = (2S)-2-isopropylmalate + CoA + H(+). It participates in amino-acid biosynthesis; L-leucine biosynthesis; L-leucine from 3-methyl-2-oxobutanoate: step 1/4. Its function is as follows. Catalyzes the condensation of the acetyl group of acetyl-CoA with 3-methyl-2-oxobutanoate (2-ketoisovalerate) to form 3-carboxy-3-hydroxy-4-methylpentanoate (2-isopropylmalate). The sequence is that of 2-isopropylmalate synthase from Ruminiclostridium cellulolyticum (strain ATCC 35319 / DSM 5812 / JCM 6584 / H10) (Clostridium cellulolyticum).